Reading from the N-terminus, the 429-residue chain is MTLMEECRRTVPDTVRKIAEEEGVRPEKLARRVAEGRVVVPAHADRRDEVRPVGIGEGLRVKINANVGTSPEVCDPDLEVEKARAAVDHGADTVMDLSTGGDLREIRRRIMKAVDVPVGTVPVYEAAVEMTRRGRAVVDMDEDDMLRAIERHMEDGVDFMTVHCAVTLDALEDVLRRGRALGIVSRGGAIVAAWMIHHDAENPLYENFDYILELAREHDVTLSLGDAMRPGSVLDANDAAQHRELVVQGELVDRCREAGVQAMVEGPGHVPLDQIPAVVRLQKRVCDGAPFYVLGPVPTDVAPGYDHIAAAIGGAIAAYHGADFLCYVTPAEHLALPDVKDVILGVIATRIAAHAADTARGMKYARRENEEMAEARWNLDWDRQFELAIDPKKPRHYREERPPQAKELCSMCGEYCAIKILKDALEERR.

Substrate is bound by residues asparagine 66, methionine 95, tyrosine 124, histidine 163, serine 185 to glycine 187, aspartate 226 to arginine 229, and glutamate 265. A Zn(2+)-binding site is contributed by histidine 269. Position 292 (tyrosine 292) interacts with substrate. Histidine 333 lines the Zn(2+) pocket. The [4Fe-4S] cluster site is built by cysteine 409, cysteine 412, and cysteine 416.

This sequence belongs to the ThiC family. Requires [4Fe-4S] cluster as cofactor.

The enzyme catalyses 5-amino-1-(5-phospho-beta-D-ribosyl)imidazole + S-adenosyl-L-methionine = 4-amino-2-methyl-5-(phosphooxymethyl)pyrimidine + CO + 5'-deoxyadenosine + formate + L-methionine + 3 H(+). It functions in the pathway cofactor biosynthesis; thiamine diphosphate biosynthesis. Its function is as follows. Catalyzes the synthesis of the hydroxymethylpyrimidine phosphate (HMP-P) moiety of thiamine from aminoimidazole ribotide (AIR) in a radical S-adenosyl-L-methionine (SAM)-dependent reaction. The protein is Phosphomethylpyrimidine synthase of Methanopyrus kandleri (strain AV19 / DSM 6324 / JCM 9639 / NBRC 100938).